The following is a 152-amino-acid chain: uncharacterized protein (152 aa).

This is an uncharacterized protein from Brachyspira hyodysenteriae (Treponema hyodysenteriae).